The following is a 572-amino-acid chain: Cytochrome P450 monooxygenase xilC (572 aa).

Cys-515 contacts heme.

This sequence belongs to the cytochrome P450 family. It depends on heme as a cofactor.

The protein operates within secondary metabolite biosynthesis. Functionally, cytochrome P450 monooxygenase; part of the gene cluster that mediates the biosynthesis of the 6-methyl-2-pyrone derivative xylariolide D. XilC hydroxylates the 5-alkyl-6-methyl-2-pyrone backbone called prexylariolide D, produced by the highly reducing polyketide synthase xilA, on its side chain to form xylariolide D. This Penicillium rubens (strain ATCC 28089 / DSM 1075 / NRRL 1951 / Wisconsin 54-1255) (Penicillium chrysogenum) protein is Cytochrome P450 monooxygenase xilC.